Here is a 413-residue protein sequence, read N- to C-terminus: Tyrosine--tRNA ligase (413 aa).

The 'HIGH' region signature appears at 59–68 (PTAPDIHLGH). The short motif at 243–247 (KMSKS) is the 'KMSKS' region element. K246 contributes to the ATP binding site. The S4 RNA-binding domain maps to 351–411 (LAIGQLLKQA…GKRRFARVTL (61 aa)).

Belongs to the class-I aminoacyl-tRNA synthetase family. TyrS type 2 subfamily. Homodimer.

Its subcellular location is the cytoplasm. It catalyses the reaction tRNA(Tyr) + L-tyrosine + ATP = L-tyrosyl-tRNA(Tyr) + AMP + diphosphate + H(+). Catalyzes the attachment of tyrosine to tRNA(Tyr) in a two-step reaction: tyrosine is first activated by ATP to form Tyr-AMP and then transferred to the acceptor end of tRNA(Tyr). This chain is Tyrosine--tRNA ligase, found in Burkholderia mallei (strain ATCC 23344).